Consider the following 456-residue polypeptide: tRNA modification GTPase MnmE (456 aa).

(6S)-5-formyl-5,6,7,8-tetrahydrofolate-binding residues include Arg24, Glu81, and Lys120. Positions 216-379 (GMTVVIAGRP…LRDHLKACMG (164 aa)) constitute a TrmE-type G domain. A K(+)-binding site is contributed by Asn226. Residues 226-231 (NAGKSS), 245-251 (TDIAGTT), 270-273 (DTAG), and 335-338 (NKAD) each bind GTP. Ser230 contributes to the Mg(2+) binding site. Residues Thr245, Ile247, and Thr250 each contribute to the K(+) site. Thr251 contacts Mg(2+). Lys456 lines the (6S)-5-formyl-5,6,7,8-tetrahydrofolate pocket.

It belongs to the TRAFAC class TrmE-Era-EngA-EngB-Septin-like GTPase superfamily. TrmE GTPase family. In terms of assembly, homodimer. Heterotetramer of two MnmE and two MnmG subunits. K(+) serves as cofactor.

Its subcellular location is the cytoplasm. Exhibits a very high intrinsic GTPase hydrolysis rate. Involved in the addition of a carboxymethylaminomethyl (cmnm) group at the wobble position (U34) of certain tRNAs, forming tRNA-cmnm(5)s(2)U34. The sequence is that of tRNA modification GTPase MnmE from Pseudomonas fluorescens (strain ATCC BAA-477 / NRRL B-23932 / Pf-5).